Reading from the N-terminus, the 326-residue chain is Vitamin B12 import system permease protein BtuC (326 aa).

The next 9 membrane-spanning stretches (helical) occupy residues 15–35 (WLLS…CAGE), 61–81 (LAVL…QALF), 88–108 (PGLL…VLLG), 112–132 (LPGW…TLIL), 146–166 (LLAG…AIYF), 184–204 (GGVD…LIWI), 240–260 (GWMV…GLVI), 274–294 (VLLP…DVVA), and 302–322 (ELPI…WLLL).

The protein belongs to the binding-protein-dependent transport system permease family. FecCD subfamily. The complex is composed of two ATP-binding proteins (BtuD), two transmembrane proteins (BtuC) and a solute-binding protein (BtuF).

The protein resides in the cell inner membrane. Part of the ABC transporter complex BtuCDF involved in vitamin B12 import. Involved in the translocation of the substrate across the membrane. This Salmonella enteritidis PT4 (strain P125109) protein is Vitamin B12 import system permease protein BtuC.